Here is a 377-residue protein sequence, read N- to C-terminus: Alanine racemase (377 aa).

Residue Lys37 is the Proton acceptor; specific for D-alanine of the active site. The residue at position 37 (Lys37) is an N6-(pyridoxal phosphate)lysine. Arg135 contributes to the substrate binding site. The active-site Proton acceptor; specific for L-alanine is Tyr271. Position 319 (Met319) interacts with substrate.

Belongs to the alanine racemase family. It depends on pyridoxal 5'-phosphate as a cofactor.

The catalysed reaction is L-alanine = D-alanine. The protein operates within amino-acid biosynthesis; D-alanine biosynthesis; D-alanine from L-alanine: step 1/1. Its function is as follows. Catalyzes the interconversion of L-alanine and D-alanine. May also act on other amino acids. This Helicobacter acinonychis (strain Sheeba) protein is Alanine racemase (alr).